The chain runs to 271 residues: Formamidopyrimidine-DNA glycosylase (271 aa).

P2 (schiff-base intermediate with DNA) is an active-site residue. The active-site Proton donor is the E3. K57 serves as the catalytic Proton donor; for beta-elimination activity. DNA-binding residues include H90, R109, and K151. An FPG-type zinc finger spans residues 236–270 (HVYGRGGETCTQCGNLLSEIRLGQRTTVFCSICQP). Residue R260 is the Proton donor; for delta-elimination activity of the active site.

Belongs to the FPG family. In terms of assembly, monomer. It depends on Zn(2+) as a cofactor.

The enzyme catalyses Hydrolysis of DNA containing ring-opened 7-methylguanine residues, releasing 2,6-diamino-4-hydroxy-5-(N-methyl)formamidopyrimidine.. It catalyses the reaction 2'-deoxyribonucleotide-(2'-deoxyribose 5'-phosphate)-2'-deoxyribonucleotide-DNA = a 3'-end 2'-deoxyribonucleotide-(2,3-dehydro-2,3-deoxyribose 5'-phosphate)-DNA + a 5'-end 5'-phospho-2'-deoxyribonucleoside-DNA + H(+). Involved in base excision repair of DNA damaged by oxidation or by mutagenic agents. Acts as a DNA glycosylase that recognizes and removes damaged bases. Has a preference for oxidized purines, such as 7,8-dihydro-8-oxoguanine (8-oxoG). Has AP (apurinic/apyrimidinic) lyase activity and introduces nicks in the DNA strand. Cleaves the DNA backbone by beta-delta elimination to generate a single-strand break at the site of the removed base with both 3'- and 5'-phosphates. The sequence is that of Formamidopyrimidine-DNA glycosylase from Shewanella oneidensis (strain ATCC 700550 / JCM 31522 / CIP 106686 / LMG 19005 / NCIMB 14063 / MR-1).